Consider the following 351-residue polypeptide: Glycerol-3-phosphate dehydrogenase [NAD(P)+] (351 aa).

Residues Ser18, Trp19, Arg38, and Lys122 each contribute to the NADPH site. The sn-glycerol 3-phosphate site is built by Lys122, Gly153, and Ser155. Residue Ala157 coordinates NADPH. Residues Lys208, Asp261, Ser271, Arg272, and Asn273 each coordinate sn-glycerol 3-phosphate. Residue Lys208 is the Proton acceptor of the active site. Arg272 lines the NADPH pocket. Glu297 contacts NADPH.

The protein belongs to the NAD-dependent glycerol-3-phosphate dehydrogenase family.

Its subcellular location is the cytoplasm. The enzyme catalyses sn-glycerol 3-phosphate + NAD(+) = dihydroxyacetone phosphate + NADH + H(+). The catalysed reaction is sn-glycerol 3-phosphate + NADP(+) = dihydroxyacetone phosphate + NADPH + H(+). It functions in the pathway membrane lipid metabolism; glycerophospholipid metabolism. Its function is as follows. Catalyzes the reduction of the glycolytic intermediate dihydroxyacetone phosphate (DHAP) to sn-glycerol 3-phosphate (G3P), the key precursor for phospholipid synthesis. The polypeptide is Glycerol-3-phosphate dehydrogenase [NAD(P)+] (Bordetella parapertussis (strain 12822 / ATCC BAA-587 / NCTC 13253)).